The sequence spans 222 residues: Glutathione S-transferase A1 (222 aa).

At M1 the chain carries N-acetylmethionine. A2 carries the N-acetylalanine; in Glutathione S-transferase A1, N-terminally processed modification. Residues 3–83 (GKPTLHYFNG…YIATKYNLYG (81 aa)) form the GST N-terminal domain. At K4 the chain carries N6-succinyllysine. Glutathione is bound by residues Y9, K45, 54-55 (QV), and 67-68 (QT). Residues 85 to 208 (DMKERALIDM…QPGSQRKPPT (124 aa)) form the GST C-terminal domain.

Belongs to the GST superfamily. Alpha family. As to quaternary structure, homodimer or heterodimer of GSTA1 and GSTA2. Expressed in corpus luteum, adrenal gland, testis, liver, lung, thyroid and kidney.

Its subcellular location is the cytoplasm. It carries out the reaction RX + glutathione = an S-substituted glutathione + a halide anion + H(+). The enzyme catalyses prostaglandin A2 + glutathione = prostaglandin A2-S-(R)-glutathione. The catalysed reaction is prostaglandin J2 + glutathione = prostaglandin J2-S-(R)-glutathione. It catalyses the reaction (13S)-hydroperoxy-(9Z,11E)-octadecadienoate + 2 glutathione = (13S)-hydroxy-(9Z,11E)-octadecadienoate + glutathione disulfide + H2O. It carries out the reaction androst-5-ene-3,17-dione = androst-4-ene-3,17-dione. Functionally, glutathione S-transferase that catalyzes the nucleophilic attack of the sulfur atom of glutathione on the electrophilic groups of a wide range of exogenous and endogenous compounds. Involved in the formation of glutathione conjugates of both prostaglandin A2 (PGA2) and prostaglandin J2 (PGJ2). It also catalyzes the isomerization of D5-androstene-3,17-dione (AD) into D4-androstene-3,17-dione and may therefore play an important role in hormone biosynthesis. Through its glutathione-dependent peroxidase activity toward the fatty acid hydroperoxide (13S)-hydroperoxy-(9Z,11E)-octadecadienoate/13-HPODE it is also involved in the metabolism of oxidized linoleic acid. The protein is Glutathione S-transferase A1 (GSTA1) of Bos taurus (Bovine).